We begin with the raw amino-acid sequence, 420 residues long: Acetyl-CoA acetyltransferase A, mitochondrial (420 aa).

A mitochondrion-targeting transit peptide spans 1–33; sequence MAFCGTRTAARLSHSTRALHNTHRNFASQRTLN. Cys119 (acyl-thioester intermediate) is an active-site residue. Residues Tyr212, 251 to 253, and Lys256 contribute to the CoA site; that span reads RVD. Tyr212 provides a ligand contact to K(+). Positions 273 and 274 each coordinate K(+). Residue Ser277 participates in CoA binding. Val374 lines the K(+) pocket. The Proton donor/acceptor role is filled by Cys406.

The protein belongs to the thiolase-like superfamily. Thiolase family. As to quaternary structure, homotetramer.

Its subcellular location is the mitochondrion. It catalyses the reaction 2 acetyl-CoA = acetoacetyl-CoA + CoA. The catalysed reaction is propanoyl-CoA + acetyl-CoA = 2-methyl-3-oxobutanoyl-CoA + CoA. It participates in lipid metabolism; fatty acid beta-oxidation. Its function is as follows. This is one of the enzymes that catalyzes the last step of the mitochondrial beta-oxidation pathway, an aerobic process breaking down fatty acids into acetyl-CoA. Using free coenzyme A/CoA, catalyzes the thiolytic cleavage of medium- to long-chain 3-oxoacyl-CoAs into acetyl-CoA and a fatty acyl-CoA shortened by two carbon atoms. The activity of the enzyme is reversible and it can also catalyze the condensation of two acetyl-CoA molecules into acetoacetyl-CoA. Thereby, it plays a major role in ketone body metabolism. The polypeptide is Acetyl-CoA acetyltransferase A, mitochondrial (acat1-a) (Xenopus laevis (African clawed frog)).